A 153-amino-acid polypeptide reads, in one-letter code: NAD(P)H-quinone oxidoreductase subunit N (153 aa).

The protein belongs to the complex I NdhN subunit family. NDH-1 can be composed of about 15 different subunits; different subcomplexes with different compositions have been identified which probably have different functions.

The protein resides in the cellular thylakoid membrane. The catalysed reaction is a plastoquinone + NADH + (n+1) H(+)(in) = a plastoquinol + NAD(+) + n H(+)(out). The enzyme catalyses a plastoquinone + NADPH + (n+1) H(+)(in) = a plastoquinol + NADP(+) + n H(+)(out). Its function is as follows. NDH-1 shuttles electrons from an unknown electron donor, via FMN and iron-sulfur (Fe-S) centers, to quinones in the respiratory and/or the photosynthetic chain. The immediate electron acceptor for the enzyme in this species is believed to be plastoquinone. Couples the redox reaction to proton translocation, and thus conserves the redox energy in a proton gradient. Cyanobacterial NDH-1 also plays a role in inorganic carbon-concentration. This Synechococcus sp. (strain CC9605) protein is NAD(P)H-quinone oxidoreductase subunit N.